The sequence spans 449 residues: Glutathione reductase (449 aa).

FAD contacts are provided by S15, G16, E35, T42, C43, and K51. Residue S15 participates in glutathione binding. A disulfide bond links C43 and C48. Y99 is a glutathione binding site. Position 115 (A115) interacts with FAD. G175, I178, E181, R198, R204, and G261 together coordinate NADP(+). 2 residues coordinate FAD: D302 and T310. Residue A340 coordinates NADP(+). H435 provides a ligand contact to FAD. H435 acts as the Proton acceptor in catalysis.

The protein belongs to the class-I pyridine nucleotide-disulfide oxidoreductase family. Homodimer. The cofactor is FAD.

The protein resides in the cytoplasm. The enzyme catalyses 2 glutathione + NADP(+) = glutathione disulfide + NADPH + H(+). The protein operates within xenobiotic degradation; (2,4,5-trichlorophenoxy)acetate degradation. In terms of biological role, catalyzes the reduction of glutathione disulfide (GSSG) to reduced glutathione (GSH). Constitutes the major mechanism to maintain a high GSH:GSSG ratio in the cytosol. The polypeptide is Glutathione reductase (gor) (Burkholderia cepacia (Pseudomonas cepacia)).